The primary structure comprises 83 residues: Small ribosomal subunit protein bS18 (83 aa).

The protein belongs to the bacterial ribosomal protein bS18 family. In terms of assembly, part of the 30S ribosomal subunit. Forms a tight heterodimer with protein bS6.

Functionally, binds as a heterodimer with protein bS6 to the central domain of the 16S rRNA, where it helps stabilize the platform of the 30S subunit. The polypeptide is Small ribosomal subunit protein bS18 (Desulfosudis oleivorans (strain DSM 6200 / JCM 39069 / Hxd3) (Desulfococcus oleovorans)).